The chain runs to 194 residues: Flavin prenyltransferase UbiX (194 aa).

FMN-binding positions include 9-11, Ser35, 86-89, and Arg121; these read GAS and SIKT. Dimethylallyl phosphate contacts are provided by Tyr151 and Lys167.

This sequence belongs to the UbiX/PAD1 family.

It carries out the reaction dimethylallyl phosphate + FMNH2 = prenylated FMNH2 + phosphate. Its function is as follows. Involved in the carboxylation of phenylphosphate. Flavin prenyltransferase that catalyzes the synthesis of the prenylated FMN cofactor (prenyl-FMN) for 4-hydroxy-3-polyprenylbenzoic acid decarboxylase UbiD. The prenyltransferase is metal-independent and links a dimethylallyl moiety from dimethylallyl monophosphate (DMAP) to the flavin N5 and C6 atoms of FMN. This is Flavin prenyltransferase UbiX from Thauera aromatica.